The following is a 615-amino-acid chain: Chaperone protein DnaK (615 aa).

Thr195 is modified (phosphothreonine; by autocatalysis). Residues 592–615 are disordered; it reads EKGAQAASGKGPDDVIDADYKPAD.

Belongs to the heat shock protein 70 family.

Functionally, acts as a chaperone. The chain is Chaperone protein DnaK from Thermus thermophilus (strain ATCC BAA-163 / DSM 7039 / HB27).